Here is an 83-residue protein sequence, read N- to C-terminus: RNA-binding protein Hfq (83 aa).

Positions Asp9–Val68 constitute a Sm domain.

Belongs to the Hfq family. In terms of assembly, homohexamer.

Its function is as follows. RNA chaperone that binds small regulatory RNA (sRNAs) and mRNAs to facilitate mRNA translational regulation in response to envelope stress, environmental stress and changes in metabolite concentrations. Also binds with high specificity to tRNAs. This Hahella chejuensis (strain KCTC 2396) protein is RNA-binding protein Hfq.